Consider the following 223-residue polypeptide: Type III pantothenate kinase (223 aa).

An ATP-binding site is contributed by 17-24 (DIGNTRIH). Substrate-binding positions include tyrosine 81 and 85–88 (GIDR). Aspartate 87 (proton acceptor) is an active-site residue. Aspartate 102 is a binding site for K(+). Serine 105 is an ATP binding site. A substrate-binding site is contributed by threonine 157.

This sequence belongs to the type III pantothenate kinase family. As to quaternary structure, homodimer. NH4(+) is required as a cofactor. The cofactor is K(+).

It is found in the cytoplasm. It catalyses the reaction (R)-pantothenate + ATP = (R)-4'-phosphopantothenate + ADP + H(+). It functions in the pathway cofactor biosynthesis; coenzyme A biosynthesis; CoA from (R)-pantothenate: step 1/5. Functionally, catalyzes the phosphorylation of pantothenate (Pan), the first step in CoA biosynthesis. The chain is Type III pantothenate kinase from Helicobacter pylori (strain J99 / ATCC 700824) (Campylobacter pylori J99).